A 42-amino-acid polypeptide reads, in one-letter code: CAKKRNWCGKNEDCCCPMKCIYAWYNQQGSCQTTITGLFKKC.

4 disulfide bridges follow: C1–C15, C8–C20, C14–C31, and C16–C42.

This sequence belongs to the neurotoxin 06 (delta-actx) family. Expressed by the venom gland.

The protein localises to the secreted. Inhibits tetrodotoxin-sensitive voltage-gated sodium channels (Nav) by binding to site 3. It slows the inactivation, causes a prolongation of action potential duration resulting in repetitive firing in autonomic and motor nerve fibers. Does not depolarize the resting potential. Does not affect tetrodotoxin-resistant sodium channels. This lethal neurotoxin is active on both insect and mammalian voltage-gated sodium channels. The polypeptide is Delta-hexatoxin-Ar1a (Atrax robustus (Sydney funnel-web spider)).